Reading from the N-terminus, the 390-residue chain is Putative nickel insertion protein (390 aa).

This sequence belongs to the LarC family.

The sequence is that of Putative nickel insertion protein from Geotalea daltonii (strain DSM 22248 / JCM 15807 / FRC-32) (Geobacter daltonii).